The chain runs to 531 residues: HERV-H LTR-associating protein 1 (531 aa).

The N-terminal stretch at methionine 1 to glycine 29 is a signal peptide. Asparagine 79, asparagine 143, and asparagine 161 each carry an N-linked (GlcNAc...) asparagine glycan. Disordered regions lie at residues glycine 231–glutamate 289 and glutamate 340–glutamate 362. Composition is skewed to polar residues over residues threonine 232–tryptophan 269 and glutamate 349–glutamate 362.

Its subcellular location is the secreted. This is HERV-H LTR-associating protein 1 (HHLA1) from Homo sapiens (Human).